Here is a 610-residue protein sequence, read N- to C-terminus: UvrABC system protein C (610 aa).

The GIY-YIG domain maps to 16-94; it reads SQPGVYRMYD…IKLYQPRYNV (79 aa). A UVR domain is found at 204-239; the sequence is DQVLTQLISRMETASQNLEFEEAARIRDQIQAVRRV.

This sequence belongs to the UvrC family. In terms of assembly, interacts with UvrB in an incision complex.

It is found in the cytoplasm. The UvrABC repair system catalyzes the recognition and processing of DNA lesions. UvrC both incises the 5' and 3' sides of the lesion. The N-terminal half is responsible for the 3' incision and the C-terminal half is responsible for the 5' incision. The chain is UvrABC system protein C from Escherichia coli (strain SMS-3-5 / SECEC).